Reading from the N-terminus, the 384-residue chain is Methyl-CpG-binding domain-containing protein 10 (384 aa).

The MBD domain occupies 4-74 (TDELVSIELP…SEFEWTTGET (71 aa)). Positions 65-384 (SEFEWTTGET…QQGAAASVSC (320 aa)) are disordered. The segment covering 80-91 (RISQKVKATTPT) has biased composition (polar residues). Positions 100 to 224 (KRRSSLTKKD…MEVDTSELEK (125 aa)) form a coiled coil. Basic and acidic residues-rich tracts occupy residues 106–227 (TKKD…KKAG), 234–250 (EPSK…KEAQ), and 257–269 (DVEK…KTEN). Residues 270 to 284 (KGSVTTEANGEQNVT) show a composition bias toward polar residues. A compositionally biased stretch (basic and acidic residues) spans 295–365 (EADKGKESKE…NDMKAEDTNR (71 aa)). Positions 310–356 (TEAEANKENDTQESDEKKTEAAANKENETQESDVKKTEAAVAEEKSN) form a coiled coil. Serine 323 carries the phosphoserine modification. Positions 369 to 384 (ANQVQQQQGAAASVSC) are enriched in low complexity.

As to expression, expressed in leaves, buds, flowers, stems and siliques.

The protein localises to the nucleus. Functionally, probable transcriptional regulator. Required for nucleolar dominance that consist in the silencing of rRNA genes inherited from one progenitor in genetic hybrids. In Arabidopsis thaliana (Mouse-ear cress), this protein is Methyl-CpG-binding domain-containing protein 10 (MBD10).